The following is a 406-amino-acid chain: Elongation factor Tu-A (406 aa).

The tr-type G domain occupies 10 to 215; the sequence is KPHVNVGTIG…AIDEYIPTPV (206 aa). A G1 region spans residues 19–26; that stretch reads GHVDHGKT. 19 to 26 is a binding site for GTP; sequence GHVDHGKT. T26 contacts Mg(2+). Residues 61–65 form a G2 region; sequence GITIN. The G3 stretch occupies residues 82 to 85; the sequence is DCPG. GTP is bound by residues 82–86 and 137–140; these read DCPGH and NKVD. The segment at 137–140 is G4; the sequence is NKVD. The tract at residues 175 to 177 is G5; sequence SAL. T395 carries the phosphothreonine modification.

The protein belongs to the TRAFAC class translation factor GTPase superfamily. Classic translation factor GTPase family. EF-Tu/EF-1A subfamily. In terms of assembly, monomer. Binds to the 70S ribosome, contacts tmRNA during trans-translation. Phosphorylated on a threonine.

It is found in the cytoplasm. It catalyses the reaction GTP + H2O = GDP + phosphate + H(+). GTP hydrolase that promotes the GTP-dependent binding of aminoacyl-tRNA to the A-site of ribosomes during protein biosynthesis. Its function is as follows. EF-Tu-GDP binds to the acceptor arm of tmRNA by interacting with its acceptor arm, suggesting that GTP hydrolysis by EF-Tu is essential for tmRNA function. In terms of biological role, protects glycyl-tRNA(Gly) from hydrolysis by E.coli D-aminoacyl-tRNA deacylase (dtd). This is Elongation factor Tu-A from Thermus thermophilus (strain ATCC 27634 / DSM 579 / HB8).